The chain runs to 2359 residues: Low-reducing polyketide synthase drtA (2359 aa).

Residues 17-444 enclose the Ketosynthase family 3 (KS3) domain; that stretch reads LPPIAVVSFA…GANAHVIVEE (428 aa). Active-site for beta-ketoacyl synthase activity residues include Cys-190, His-327, and His-367. Residues 556–868 are malonyl-CoA:ACP transacylase (MAT) domain; that stretch reads VFTGQGSQWP…QYLAALDRGK (313 aa). Catalysis depends on Ser-648, which acts as the For malonyltransferase activity. The tract at residues 940–1077 is N-terminal hotdog fold; it reads HELLGRKILG…GRISVRQVAA (138 aa). Residues 940-1245 are dehydratase (DH) domain; it reads HELLGRKILG…FKGLRFSELN (306 aa). The PKS/mFAS DH domain occupies 940–1250; the sequence is HELLGRKILG…FSELNMGDGV (311 aa). Catalysis depends on His-972, which acts as the Proton acceptor; for dehydratase activity. A C-terminal hotdog fold region spans residues 1089-1250; it reads AYSESAEHWY…FSELNMGDGV (162 aa). The active-site Proton donor; for dehydratase activity is Asp-1153. Residues 1659–1970 are enoyl reductase (ER) domain; it reads GSFDSLELYE…TGRHVGKVVV (312 aa). Residues 1995 to 2172 form a ketoreductase (KR) domain region; the sequence is SYLITGGLHG…LSLDIGAVQD (178 aa). Positions 2280 to 2356 constitute a Carrier domain; that stretch reads ALTEAAIELF…ALCSKLITRL (77 aa). The residue at position 2316 (Ser-2316) is an O-(pantetheine 4'-phosphoryl)serine.

It functions in the pathway secondary metabolite biosynthesis; terpenoid biosynthesis. In terms of biological role, low-reducing polyketide synthase; part of the gene cluster that mediates the biosynthesis of various drimane-type sesquiterpene esters, compounds that exhibit diverse biological activities and are widely present in eukaryotes. The pathway begins with the synthesis of the backbone drimenol by the terpene cyclase drtB using farnesyl pyrophosphate (FPP) as substrate. The cytochrome P450 monooxygenase drtD is then responsible for the hydroxylations at C-6, C-9 and C-12, as well as the oxidation of hydroxyl groups at C-6 and C-11 to a ketone and an aldehyde, respectively. Then, the biosynthesis can go in two directions, either the hydroxylated drimenol is further hydroxylated at C-2 and C-3 by an enzyme(s) not associated with the drt cluster, or the FAD-binding oxidoreductase drtC further oxidizes C-11 or C-12 to form the butyrolactone ring. DrtB, drtD and drtC are solely responsible for the formation of the different drimane structures observed during drimane sesquiterpenes biosynthesis. The polyketide synthase drtA synthesizes different lengths (C6 and C8) of PKS chains, which are then oxidized to varying degrees by the short-chain dehydrogenase drtF. Finally, these PKS chains are transferred onto drimane sesquiterpenes by the acyltransferase drtE, forming the sesquiterpene esters. In addition to the different fatty acyl-CoA chains produced by drtA, drtE is also able to use cinnamoyl-CoA as a substrate. The polypeptide is Low-reducing polyketide synthase drtA (Aspergillus calidoustus).